Reading from the N-terminus, the 635-residue chain is MESPSAHAVSLPEDEELQPWGGAGGPGQHPGRPRSTECAHPGVVEKVRPKWDNPLQFLLVCISYAVGLGNVWRFPYLCQMYGGGNFLVPYIIMLIVEGMPLLYLELAVGQRMRQGSIGAWRTISPYLSGVGIASLVVSFLASVYFNVINTWALWYLFHSFQDPLPWSVCPLNSNHTGYDEECEKASSTQYFWYRKTLNISPSIQENGGVQWEPALCLTLAWLMVYLCILRGTESTGKVVYFTTSLPYFVLIIYLVRGLTLHGATNGLAYMFTPKIEQLANPKAWINAATQIFFSLGLGCGGLIAFASYNEPSNDCQKHALIVSVINSTTAIFSSIVTFSIYGFKATFNYENCLNKVILLLTNSFDLEDGFLTVSNLEEVKNYLASTYPNKYSEVFPHIRNCSLESELDTAVQGTGLAFIVYTEAIKNMEVSQLWSVLYFFMLLTLGMGSMVGTGTAILTPLTDSKIISSYLPKEAISGLVCLLNCAIGMVFTMEAGNYWFDLFNDYTATLSLLLIVLVETIAVCYVYGLKRFESDLRAMTGRTLSWYWKVMWAFVSPLLIVGLFIFYLSDYILTGTLQYQAWDATQGHVVTKDYPTYALAVIGLLVASSTMCIPLVALGTFVTRHFKIREQFSAA.

Residues methionine 1 to cysteine 38 form a disordered region. Residues methionine 1–glutamine 56 are Cytoplasmic-facing. Residues phenylalanine 57–leucine 77 traverse the membrane as a helical segment. Topologically, residues cysteine 78 to asparagine 85 are extracellular. The helical transmembrane segment at phenylalanine 86–leucine 106 threads the bilayer. Over alanine 107–leucine 127 the chain is Cytoplasmic. The helical transmembrane segment at serine 128–isoleucine 148 threads the bilayer. The Extracellular portion of the chain corresponds to asparagine 149 to glycine 208. N-linked (GlcNAc...) asparagine glycosylation is present at asparagine 174. A helical transmembrane segment spans residues valine 209–leucine 229. Topologically, residues arginine 230 to lysine 237 are cytoplasmic. Residues valine 238–leucine 258 form a helical membrane-spanning segment. The Extracellular segment spans residues threonine 259 to tryptophan 284. The chain crosses the membrane as a helical span at residues isoleucine 285–phenylalanine 305. Topologically, residues alanine 306–alanine 319 are cytoplasmic. A helical membrane pass occupies residues leucine 320–isoleucine 340. Residues tyrosine 341 to glutamine 432 lie on the Extracellular side of the membrane. Asparagine 400 is a glycosylation site (N-linked (GlcNAc...) asparagine). A helical transmembrane segment spans residues leucine 433 to threonine 453. Topologically, residues glycine 454–glutamate 474 are cytoplasmic. A helical transmembrane segment spans residues alanine 475–alanine 495. Over glycine 496–alanine 508 the chain is Extracellular. The chain crosses the membrane as a helical span at residues threonine 509–leucine 529. Over lysine 530 to tyrosine 547 the chain is Cytoplasmic. A helical transmembrane segment spans residues tryptophan 548–leucine 568. Residues serine 569–tyrosine 597 are Extracellular-facing. A helical membrane pass occupies residues alanine 598–leucine 618. Residues glycine 619–alanine 635 are Cytoplasmic-facing.

Belongs to the sodium:neurotransmitter symporter (SNF) (TC 2.A.22) family. SLC6A20 subfamily. In terms of assembly, interacts with CLTRN. Detected only in kidney and lung.

The protein localises to the apical cell membrane. In terms of biological role, does not show transporter activity with a range of tested amino acids including proline, glutamine, glutamic acid, leucine, alanine, histidine, glycine and arginine. The protein is Sodium- and chloride-dependent transporter XTRP3B (Slc6a20b) of Mus musculus (Mouse).